Reading from the N-terminus, the 207-residue chain is Guanylate kinase (207 aa).

One can recognise a Guanylate kinase-like domain in the interval 4-184 (GTLYIVSAPS…ALMDFKAIIR (181 aa)). ATP is bound at residue 11–18 (APSGAGKS).

This sequence belongs to the guanylate kinase family.

The protein resides in the cytoplasm. The catalysed reaction is GMP + ATP = GDP + ADP. Its function is as follows. Essential for recycling GMP and indirectly, cGMP. This chain is Guanylate kinase, found in Vibrio vulnificus (strain CMCP6).